The primary structure comprises 495 residues: uncharacterized protein (495 aa).

The disordered stretch occupies residues 337-360 (STSNRESDCSGNEDDSSNAKYAKK).

This is an uncharacterized protein from Caenorhabditis elegans.